Consider the following 155-residue polypeptide: Troponin C, isoform 2 (155 aa).

EF-hand domains lie at 11-46 (EQIA…MGQP), 47-82 (FDRQ…FIVE), 87-122 (AMQK…LDDQ), and 123-155 (LTEQ…MTGE). Positions 60, 62, 64, 66, and 71 each coordinate Ca(2+). Residues D136, D138, S140, T142, and E147 each coordinate Ca(2+).

The protein belongs to the troponin C family. Accumulates almost exclusively in larval muscles.

The polypeptide is Troponin C, isoform 2 (TpnC47D) (Drosophila melanogaster (Fruit fly)).